The following is a 435-amino-acid chain: Solute carrier family 38 member 8 (435 aa).

11 helical membrane passes run 29-49 (AVFI…PWAF), 55-75 (VVPA…GLVI), 100-120 (IGKL…VAFL), 151-171 (FTLP…REIA), 178-198 (ILGT…YYLW), 218-240 (VFSV…SIYC), 250-270 (WALV…LTGV), 295-315 (IIVA…IVLF), 348-368 (MPLT…MPDL), 374-394 (IIGG…LICA), and 410-430 (VWGV…TAAA).

It belongs to the amino acid/polyamine transporter 2 family. Expressed in fetal and adult brain, and spinal cord. In the brain, it is localized in the cell body and axon of the majority of neuronal cells and in a subset of glial cells. Found throughout the neuronal retina, with higher expression levels in the inner and outer plexiform layers and the photoreceptor layer. Very weak expression is also present in the kidneys, thymus, and testes.

The protein localises to the membrane. Its subcellular location is the cytoplasm. The protein resides in the cell cortex. It localises to the cell projection. It is found in the axon. It catalyses the reaction L-glutamine(out) = L-glutamine(in). The catalysed reaction is L-alanine(in) = L-alanine(out). The enzyme catalyses L-histidine(out) = L-histidine(in). It carries out the reaction L-aspartate(out) = L-aspartate(in). It catalyses the reaction L-arginine(in) = L-arginine(out). The catalysed reaction is L-leucine(in) = L-leucine(out). Functionally, electrogenic sodium-dependent amino acid transporter with a preference for L-glutamine, L-alanine, L-histidine, L-aspartate and L-arginine. May facilitate glutamine uptake in both excitatory and inhibitory neurons. The transport mechanism and stoichiometry remain to be elucidated. This chain is Solute carrier family 38 member 8, found in Homo sapiens (Human).